The sequence spans 141 residues: D-aminoacyl-tRNA deacylase (141 aa).

The short motif at 133–134 is the Gly-cisPro motif, important for rejection of L-amino acids element; the sequence is GP.

The protein belongs to the DTD family. Homodimer.

The protein resides in the cytoplasm. The catalysed reaction is glycyl-tRNA(Ala) + H2O = tRNA(Ala) + glycine + H(+). It carries out the reaction a D-aminoacyl-tRNA + H2O = a tRNA + a D-alpha-amino acid + H(+). In terms of biological role, an aminoacyl-tRNA editing enzyme that deacylates mischarged D-aminoacyl-tRNAs. Also deacylates mischarged glycyl-tRNA(Ala), protecting cells against glycine mischarging by AlaRS. Acts via tRNA-based rather than protein-based catalysis; rejects L-amino acids rather than detecting D-amino acids in the active site. By recycling D-aminoacyl-tRNA to D-amino acids and free tRNA molecules, this enzyme counteracts the toxicity associated with the formation of D-aminoacyl-tRNA entities in vivo and helps enforce protein L-homochirality. The sequence is that of D-aminoacyl-tRNA deacylase from Kineococcus radiotolerans (strain ATCC BAA-149 / DSM 14245 / SRS30216).